A 342-amino-acid chain; its full sequence is Phosphate acyltransferase (342 aa).

The protein belongs to the PlsX family. In terms of assembly, homodimer. Probably interacts with PlsY.

Its subcellular location is the cytoplasm. The catalysed reaction is a fatty acyl-[ACP] + phosphate = an acyl phosphate + holo-[ACP]. The protein operates within lipid metabolism; phospholipid metabolism. Functionally, catalyzes the reversible formation of acyl-phosphate (acyl-PO(4)) from acyl-[acyl-carrier-protein] (acyl-ACP). This enzyme utilizes acyl-ACP as fatty acyl donor, but not acyl-CoA. This Pelotomaculum thermopropionicum (strain DSM 13744 / JCM 10971 / SI) protein is Phosphate acyltransferase.